A 177-amino-acid chain; its full sequence is Transcription factor E (177 aa).

The HTH TFE/IIEalpha-type domain occupies 9–91; that stretch reads VEELLNELVG…YWRINYDKAL (83 aa).

Belongs to the TFE family. In terms of assembly, monomer. Interaction with RNA polymerase subunits RpoF and RpoE is necessary for Tfe stimulatory transcription activity. Able to interact with Tbp and RNA polymerase in the absence of DNA promoter. Interacts both with the preinitiation and elongation complexes.

Transcription factor that plays a role in the activation of archaeal genes transcribed by RNA polymerase. Facilitates transcription initiation by enhancing TATA-box recognition by TATA-box-binding protein (Tbp), and transcription factor B (Tfb) and RNA polymerase recruitment. Not absolutely required for transcription in vitro, but particularly important in cases where Tbp or Tfb function is not optimal. It dynamically alters the nucleic acid-binding properties of RNA polymerases by stabilizing the initiation complex and destabilizing elongation complexes. Seems to translocate with the RNA polymerase following initiation and acts by binding to the non template strand of the transcription bubble in elongation complexes. The sequence is that of Transcription factor E from Archaeoglobus fulgidus (strain ATCC 49558 / DSM 4304 / JCM 9628 / NBRC 100126 / VC-16).